A 410-amino-acid polypeptide reads, in one-letter code: NIPA-like protein 3 (410 aa).

The interval 1-24 (MDGAHSAGLQLQPLPPTSGATSTS) is disordered. Transmembrane regions (helical) follow at residues 37–57 (NLIGALLAIFGHLVVSIALNL), 80–100 (WWLGLLLLLLGELGVFASYAF), 105–125 (LIVPLSAVSVIASAIIGIIFI), 139–159 (VLSFVGCGLAIVGTYLLVTFA), 175–195 (LVSWPFLLYMLVAIVLFCLLL), 206–226 (IVVILLLVALLGSMTVVTVKA), 244–264 (PIFYVMFVCMVATAIYQATFL), 275–295 (LIASVGYILSTTAAITAGAIF), and 304–324 (ALHICMFALGCLIAFLGVFLI). Ser376 bears the Phosphoserine mark. The disordered stretch occupies residues 389–410 (EEHSSRSTPGVPYRVLEHTKKE).

Belongs to the NIPA family.

It localises to the membrane. The protein is NIPA-like protein 3 (Nipal3) of Mus musculus (Mouse).